Here is a 149-residue protein sequence, read N- to C-terminus: MWFSRKQVVKPPPDGSRAQPGQVTTKSRGDAAESAAQVFLARAGLIPVESNYRTPGRGGGEIDLVMRTPDGTLVFVEVRQRSGASHGGAAASISPAKQQRIIFAARHYLMRFASPPPCRFDVVLVHGGPGQGPVENGRLEWLPAAFDAS.

The tract at residues 1 to 30 (MWFSRKQVVKPPPDGSRAQPGQVTTKSRGD) is disordered.

Belongs to the UPF0102 family.

The polypeptide is UPF0102 protein Bpro_0391 (Polaromonas sp. (strain JS666 / ATCC BAA-500)).